The following is a 366-amino-acid chain: Beta sliding clamp (366 aa).

It belongs to the beta sliding clamp family. Forms a ring-shaped head-to-tail homodimer around DNA which binds and tethers DNA polymerases and other proteins to the DNA. The DNA replisome complex has a single clamp-loading complex (3 tau and 1 each of delta, delta', psi and chi subunits) which binds 3 Pol III cores (1 core on the leading strand and 2 on the lagging strand) each with a beta sliding clamp dimer. Additional proteins in the replisome are other copies of gamma, psi and chi, Ssb, DNA helicase and RNA primase.

It is found in the cytoplasm. Confers DNA tethering and processivity to DNA polymerases and other proteins. Acts as a clamp, forming a ring around DNA (a reaction catalyzed by the clamp-loading complex) which diffuses in an ATP-independent manner freely and bidirectionally along dsDNA. Initially characterized for its ability to contact the catalytic subunit of DNA polymerase III (Pol III), a complex, multichain enzyme responsible for most of the replicative synthesis in bacteria; Pol III exhibits 3'-5' exonuclease proofreading activity. The beta chain is required for initiation of replication as well as for processivity of DNA replication. The sequence is that of Beta sliding clamp (dnaN) from Vibrio cholerae serotype O1 (strain ATCC 39315 / El Tor Inaba N16961).